We begin with the raw amino-acid sequence, 152 residues long: Ferredoxin-thioredoxin reductase catalytic chain, chloroplastic (152 aa).

The N-terminal 38 residues, 1–38, are a transit peptide targeting the chloroplast; that stretch reads MTSTVTTTVGCGGLPVRPLSTATRGRPRRCAVRAQAAG. Cys-91 serves as a coordination point for [4Fe-4S] cluster. Catalysis depends on Cys-93, which acts as the Nucleophile. The cysteines at positions 93 and 123 are disulfide-linked. Residues Cys-110, Cys-112, and Cys-121 each contribute to the [4Fe-4S] cluster site.

This sequence belongs to the ferredoxin thioredoxin reductase beta subunit family. Heterodimer of subunit A (variable subunit) and subunit B (catalytic subunit). Heterodimeric FTR forms a complex with ferredoxin and thioredoxin. The cofactor is [4Fe-4S] cluster.

Its subcellular location is the plastid. It localises to the chloroplast. It catalyses the reaction [thioredoxin]-disulfide + 2 reduced [2Fe-2S]-[ferredoxin] + 2 H(+) = [thioredoxin]-dithiol + 2 oxidized [2Fe-2S]-[ferredoxin]. In terms of biological role, catalytic subunit of the ferredoxin-thioredoxin reductase (FTR), which catalyzes the two-electron reduction of thioredoxins by the electrons provided by reduced ferredoxin. This chain is Ferredoxin-thioredoxin reductase catalytic chain, chloroplastic (FTRC), found in Zea mays (Maize).